A 396-amino-acid chain; its full sequence is Odorant receptor 49a (396 aa).

At 1 to 6 (MEKLRS) the chain is on the cytoplasmic side. Residues 7–27 (YEDFIFMANMMFKTLGYDLFH) form a helical membrane-spanning segment. The Extracellular segment spans residues 28 to 34 (TPKPWWR). The helical transmembrane segment at 35–55 (YLLVRGYFVLCTISNFYEASM) threads the bilayer. Topologically, residues 56-70 (VTTRIIEWESLAGSP) are cytoplasmic. Residues 71–91 (SKIMRQGLHFFYMLSSQLKFI) traverse the membrane as a helical segment. At 92 to 141 (TFMINRKRLLQLSHRLKELYPHKEQNQRKYEVNKYYLSCSTRNVLYVYYF) the chain is on the extracellular side. A helical transmembrane segment spans residues 142–162 (VMVVMALEPLVQSCIMYLIGF). Over 163–209 (GKADFTYKRIFPTRLTFDSEKPLGYVLAYVIDFTYSQFIVNVSLGTD) the chain is Cytoplasmic. The helical transmembrane segment at 210 to 230 (LWMMCVSSQISMHLGYLANML) threads the bilayer. Residues 231-266 (ASIRPSPETEQQDCDFLASIIKRHQLMIRLQKDVNY) lie on the Extracellular side of the membrane. A helical transmembrane segment spans residues 267 to 287 (VFGLLLASNLFTTSCLLCCMA). The Cytoplasmic segment spans residues 288 to 296 (YYTVVEGFN). A helical membrane pass occupies residues 297 to 317 (WEGISYMMLFASVAAQFYVVS). At 318–396 (SHGQMLIDLS…FAVIRQTVEK (79 aa)) the chain is on the extracellular side.

The protein belongs to the insect chemoreceptor superfamily. Heteromeric odorant receptor channel (TC 1.A.69) family. Or49a subfamily. As to quaternary structure, interacts with Orco. Complexes exist early in the endomembrane system in olfactory sensory neurons (OSNs), coupling these complexes to the conserved ciliary trafficking pathway.

It localises to the cell membrane. Its function is as follows. Odorant receptor which mediates acceptance or avoidance behavior, depending on its substrates. The odorant receptor repertoire encodes a large collection of odor stimuli that vary widely in identity, intensity, and duration. May form a complex with Orco to form odorant-sensing units, providing sensitive and prolonged odorant signaling and calcium permeability. Involved in the behavioral responses to butanol and 2-heptanone. This chain is Odorant receptor 49a (Or49a), found in Drosophila melanogaster (Fruit fly).